Reading from the N-terminus, the 59-residue chain is Large ribosomal subunit protein bL32 (59 aa).

A disordered region spans residues 1–24 (MAVQQNKKSPSKRGMHRSHDFLTS).

The protein belongs to the bacterial ribosomal protein bL32 family.

The polypeptide is Large ribosomal subunit protein bL32 (Ralstonia nicotianae (strain ATCC BAA-1114 / GMI1000) (Ralstonia solanacearum)).